We begin with the raw amino-acid sequence, 502 residues long: Acetyl-coenzyme A carboxylase carboxyl transferase subunit beta, chloroplastic (502 aa).

Positions 191–202 (GSDSESSSIRTS) are enriched in low complexity. The segment at 191-212 (GSDSESSSIRTSGNDSNFNVRE) is disordered. Residues 226 to 497 (LWVQCENCYE…NQNSSGARGS (272 aa)) enclose the CoA carboxyltransferase N-terminal domain. Residues cysteine 230, cysteine 233, cysteine 249, and cysteine 252 each coordinate Zn(2+). The C4-type zinc-finger motif lies at 230 to 252 (CENCYELNYRSFFRSKMNICEQC).

It belongs to the AccD/PCCB family. Acetyl-CoA carboxylase is a heterohexamer composed of biotin carboxyl carrier protein, biotin carboxylase and 2 subunits each of ACCase subunit alpha and ACCase plastid-coded subunit beta (accD). The cofactor is Zn(2+).

The protein localises to the plastid. Its subcellular location is the chloroplast stroma. It carries out the reaction N(6)-carboxybiotinyl-L-lysyl-[protein] + acetyl-CoA = N(6)-biotinyl-L-lysyl-[protein] + malonyl-CoA. The protein operates within lipid metabolism; malonyl-CoA biosynthesis; malonyl-CoA from acetyl-CoA: step 1/1. In terms of biological role, component of the acetyl coenzyme A carboxylase (ACC) complex. Biotin carboxylase (BC) catalyzes the carboxylation of biotin on its carrier protein (BCCP) and then the CO(2) group is transferred by the transcarboxylase to acetyl-CoA to form malonyl-CoA. The polypeptide is Acetyl-coenzyme A carboxylase carboxyl transferase subunit beta, chloroplastic (Chloranthus spicatus (Chulantree)).